Consider the following 884-residue polypeptide: Exocyst complex component 2 (884 aa).

Residues 1–11 (MEENAQARERL) show a composition bias toward basic and acidic residues. Residues 1–27 (MEENAQARERLPPTVTGLSPTEGVPGT) are disordered. Positions 13 to 98 (PTVTGLSPTE…GSSNVKFRVF (86 aa)) constitute an IPT/TIG domain. Coiled coils occupy residues 178-206 (ADAT…SEEM) and 846-874 (NQRL…AENL).

This sequence belongs to the SEC5 family. As to quaternary structure, the exocyst complex is composed of sec-3/exoc1, sec-5/exoc2, sec-6/exoc3, sec-8/exoc4, sec-10/exoc5, sec-15/exoc6, exo-70/exoc7 and exo-84/exoc8.

Functionally, component of the exocyst complex involved in the docking of exocytic vesicles with fusion sites on the plasma membrane. The protein is Exocyst complex component 2 (sec-5) of Caenorhabditis elegans.